Reading from the N-terminus, the 201-residue chain is MARYTGPATRKSRRLRVDLVGGDMAFERRPYPPGQAGRARIKESEYLLQLQEKQKARFIYGVMEKQFRRYYAEANRRPGKTGENLVVMLESRLDNVVYRAGLARTRRQARQLVSHGHFVVNGKAVDVPSFRVSQYDIIDVREKSQKMNWFEEAQDNLVDAIVPAWLQVVPSTLRILVHQLPERAQIDIPLQEQLIVEFYSK.

Residues 91-151 (SRLDNVVYRA…EKSQKMNWFE (61 aa)) form the S4 RNA-binding domain.

The protein belongs to the universal ribosomal protein uS4 family. In terms of assembly, part of the 30S ribosomal subunit. Contacts protein S5. The interaction surface between S4 and S5 is involved in control of translational fidelity.

In terms of biological role, one of the primary rRNA binding proteins, it binds directly to 16S rRNA where it nucleates assembly of the body of the 30S subunit. With S5 and S12 plays an important role in translational accuracy. The sequence is that of Small ribosomal subunit protein uS4 from Corynebacterium efficiens (strain DSM 44549 / YS-314 / AJ 12310 / JCM 11189 / NBRC 100395).